Reading from the N-terminus, the 261-residue chain is Spermatogenesis-associated protein 46 (261 aa).

The interval 140-159 is disordered; that stretch reads SSSSSPENTCPREATKKSRH.

As to expression, testis-specific.

It is found in the nucleus membrane. Functionally, plays a role in spermiogenesis and fertilization. This Homo sapiens (Human) protein is Spermatogenesis-associated protein 46.